The following is a 461-amino-acid chain: Dihydrofolate reductase (461 aa).

One can recognise a DHFR domain in the interval 233 to 447; that stretch reads DLTMIVAVSS…VEIEFELYGK (215 aa). NADP(+)-binding positions include Ala-239 and 246-252; that span reads GIGKKNS. 260–265 contacts substrate; sequence EMAYFA. An NADP(+)-binding site is contributed by 292 to 294; sequence RSC. Substrate is bound at residue Arg-308. Residues 314–316 and 365–372 each bind NADP(+); these read TRN and GGSFLYGS.

This sequence belongs to the dihydrofolate reductase family.

It catalyses the reaction (6S)-5,6,7,8-tetrahydrofolate + NADP(+) = 7,8-dihydrofolate + NADPH + H(+). Its pathway is cofactor biosynthesis; tetrahydrofolate biosynthesis; 5,6,7,8-tetrahydrofolate from 7,8-dihydrofolate: step 1/1. Functionally, key enzyme in folate metabolism. Catalyzes an essential reaction for de novo glycine and purine synthesis, and for DNA precursor synthesis. The protein is Dihydrofolate reductase (dfr1) of Schizosaccharomyces pombe (strain 972 / ATCC 24843) (Fission yeast).